The primary structure comprises 457 residues: Elongation factor 1-alpha (457 aa).

G2 is subject to N,N,N-trimethylglycine. Residue K3 is modified to N6,N6-dimethyllysine; alternate. An N6-methyllysine; alternate modification is found at K3. The region spanning 5-240 (KTHVNVVVIG…DAIEPPVRPS (236 aa)) is the tr-type G domain. The G1 stretch occupies residues 14-21 (GHVDSGKS). Residue 14–21 (GHVDSGKS) coordinates GTP. At K30 the chain carries N6-methyllysine. Residues 70–74 (GITID) are G2. N6,N6,N6-trimethyllysine is present on K79. The G3 stretch occupies residues 91-94 (DAPG). GTP is bound by residues 91-95 (DAPGH) and 153-156 (NKMD). The interval 153 to 156 (NKMD) is G4. The segment at 192–194 (SGW) is G5. The residue at position 316 (K316) is an N6,N6-dimethyllysine; alternate. At K316 the chain carries N6-methyllysine; alternate. K389 is modified (N6-methyllysine).

Belongs to the TRAFAC class translation factor GTPase superfamily. Classic translation factor GTPase family. EF-Tu/EF-1A subfamily.

It is found in the cytoplasm. Its function is as follows. This protein promotes the GTP-dependent binding of aminoacyl-tRNA to the A-site of ribosomes during protein biosynthesis. This chain is Elongation factor 1-alpha (TEF-3), found in Mucor circinelloides f. lusitanicus (Mucor racemosus var. lusitanicus).